Here is a 126-residue protein sequence, read N- to C-terminus: Glycine cleavage system H protein (126 aa).

A Lipoyl-binding domain is found at 23–104 (KVRVGITDFA…YDEGWMIEII (82 aa)). Residue Lys-64 is modified to N6-lipoyllysine.

It belongs to the GcvH family. As to quaternary structure, the glycine cleavage system is composed of four proteins: P, T, L and H. The cofactor is (R)-lipoate.

Its function is as follows. The glycine cleavage system catalyzes the degradation of glycine. The H protein shuttles the methylamine group of glycine from the P protein to the T protein. The sequence is that of Glycine cleavage system H protein from Chlorobium phaeobacteroides (strain BS1).